The chain runs to 28 residues: Dermaseptin-H2 (28 aa).

Belongs to the frog skin active peptide (FSAP) family. Dermaseptin subfamily. Expressed by the skin glands.

Its subcellular location is the secreted. In terms of biological role, possesses a potent antimicrobial activity against Gram-positive and Gram-negative bacteria. Probably acts by disturbing membrane functions with its amphipathic structure. This is Dermaseptin-H2 from Pithecopus azureus (Orange-legged monkey tree frog).